The sequence spans 4965 residues: Auxin transport protein BIG (4965 aa).

Helical transmembrane passes span 289-309 (SDIC…IFSP), 646-666 (ACLA…AYEV), and 772-792 (LFLI…YEGL). The segment at 1383–1425 (TNQESNSTVDCDASSGEEDEDDGTSDGELVSIDRDEEEDGNSE) is disordered. Residues 1397–1407 (SGEEDEDDGTS) are compositionally biased toward acidic residues. The UBR-type zinc finger occupies 1431-1502 (KVCTFTSSGS…RGSSCQCLKP (72 aa)). Positions 2437 to 2456 (DDAPDNHAKASAASNSTTGN) are disordered. Residues 2445–2456 (KASAASNSTTGN) show a composition bias toward low complexity. Residues 2469–2528 (SVQYCCDGCSTVPILRRRWHCNICPDFDLCETCYEILDADRLPAPHSRDHPMSAIPIELD) form a ZZ-type zinc finger. 8 residues coordinate Zn(2+): Cys-2474, Cys-2477, Cys-2489, Cys-2492, Cys-2498, Cys-2501, His-2514, and His-2518. Residues 2997 to 3037 (NAQKTESGDIGSSTRTGSQSSDSKKKRKGDDSSEGSSEKSC) are disordered. Residues 3007 to 3017 (GSSTRTGSQSS) are compositionally biased toward low complexity. The span at 3024 to 3037 (KGDDSSEGSSEKSC) shows a compositional bias: basic and acidic residues. The segment at 3319–3359 (CPRCSRSVTDKHGICSNCHENAYQCRQCRNINYENLDSFLC) adopts an MYND-type; degenerate zinc-finger fold. Residues 3672–3721 (PKSDSGEKEPGMGKSSLMQAKNDDTVGHSVTNLSTSKTQSELSGKIPDGS) are disordered. The span at 3699 to 3713 (HSVTNLSTSKTQSEL) shows a compositional bias: polar residues. The tract at residues 4433 to 4963 (PSIPLILSML…DFVRAIIHGA (531 aa)) is UBR4 E3 catalytic module. Residues 4562–4681 (GLACMVCREG…WDQLNSLGRA (120 aa)) form a HemiRING-type zinc finger. Residues Cys-4565, Cys-4568, His-4615, and Cys-4618 each contribute to the Zn(2+) site. One can recognise a UZI domain in the interval 4684 to 4963 (SRLRLLTYDI…DFVRAIIHGA (280 aa)). Low complexity predominate over residues 4753–4770 (SSSPSTPESPVRLSALSG). Disordered regions lie at residues 4753-4778 (SSSP…SGSS) and 4822-4846 (STLK…ADSN). Positions 4824–4845 (LKLSADTSSSAVRSDEGSSADS) are enriched in polar residues.

The protein belongs to the UBR4 family.

The protein localises to the membrane. In terms of biological role, required for auxin efflux and polar auxin transport (PAT) influencing auxin-mediated developmental responses (e.g. cell elongation, apical dominance, lateral root production, inflorescence architecture, general growth and development). This Oryza sativa subsp. japonica (Rice) protein is Auxin transport protein BIG.